The sequence spans 29 residues: Cyclotide mela-7 (29 aa).

The cyclopeptide (Gly-Asn) cross-link spans 1-29 (GLPTCGETCFKGKCYTPGCSCSYPICKKN). Disulfide bonds link cysteine 5–cysteine 19, cysteine 9–cysteine 21, and cysteine 14–cysteine 26.

Post-translationally, this is a cyclic peptide. Contains 3 disulfide bonds.

In terms of biological role, probably participates in a plant defense mechanism (Potential). Binds to and induces leakage in phospholipd membranes, particularly ones containing 1-palmitoyl-2-oleophosphatidylethanolamine (POPE). In vitro, displays cytotoxicity against cultured cells but no hemolytic activity towards fresh erythrocytes. Not active against Gram-negative bacterium E.coli ATCC 25922 or Gram-positive bacterium S.aureus ATCC 25923 up to a concentration of 64 uM. The sequence is that of Cyclotide mela-7 from Melicytus latifolius (Norfolk Island mahoe).